A 489-amino-acid polypeptide reads, in one-letter code: MQSVETDRTTFTDLAADAHPAARVPVEVRVDVDDPFLAYRRARDETGGVYLATTGGQSGWGYFGTAPADFREVDPRAGGTLAALTEFLDGERLVRGDCDVPYPCGAVGWLSYDVARELESLPDSADADRALPNLQVARYDRFAAWEEPRGESVTLRVTACPRVDDFETPELAYEFGKQHALDLARAAAQGDPSVEDPPVETDEATFESDCTRESFADRVQTVKQYIRDGDTFQANVSQRLRAPAAVHPVEAFDALRTVNPAPYSALLEFPGVDLVSASPELLLHRDGDRIETEPIAGTRPRGETPDADDRLETDLLDDEKERAEHAMLVDLERNDLGKVSKFGSVEVSDYRRVDRYSEVMHLVSVVEGRLRDGASLQDAIAAVFPGGTITGAPKPRTMEIIDEVEATRRGPYTGSIGLFGFDGRATLNIVIRTLVRYAEEYHLRVGAGVVHDSDPDREYQETLDKGRALVNAVDEALGRRVDLAMEDQQ.

An L-tryptophan-binding site is contributed by 262 to 264 (PYS). Residues 288-309 (DRIETEPIAGTRPRGETPDADD) form a disordered region. 297–298 (GT) provides a ligand contact to chorismate. Over residues 300-309 (PRGETPDADD) the composition is skewed to basic and acidic residues. Residue glutamate 324 coordinates Mg(2+). Chorismate is bound by residues tyrosine 412, arginine 432, 446–448 (GAG), and glycine 448. Residue glutamate 461 participates in Mg(2+) binding.

Belongs to the anthranilate synthase component I family. Tetramer of two components I and two components II. Mg(2+) serves as cofactor.

The catalysed reaction is chorismate + L-glutamine = anthranilate + pyruvate + L-glutamate + H(+). It participates in amino-acid biosynthesis; L-tryptophan biosynthesis; L-tryptophan from chorismate: step 1/5. This Haloarcula marismortui (strain ATCC 43049 / DSM 3752 / JCM 8966 / VKM B-1809) (Halobacterium marismortui) protein is Anthranilate synthase component 1 1 (trpE1).